The chain runs to 161 residues: Ribosomal RNA large subunit methyltransferase H (161 aa).

S-adenosyl-L-methionine is bound by residues Leu-78, Gly-110, and 129–134 (LGRMTF).

Belongs to the RNA methyltransferase RlmH family. Homodimer.

It localises to the cytoplasm. It catalyses the reaction pseudouridine(1915) in 23S rRNA + S-adenosyl-L-methionine = N(3)-methylpseudouridine(1915) in 23S rRNA + S-adenosyl-L-homocysteine + H(+). Its function is as follows. Specifically methylates the pseudouridine at position 1915 (m3Psi1915) in 23S rRNA. The chain is Ribosomal RNA large subunit methyltransferase H from Symbiobacterium thermophilum (strain DSM 24528 / JCM 14929 / IAM 14863 / T).